Here is a 298-residue protein sequence, read N- to C-terminus: Enoyl-CoA hydratase AFT6-1 (298 aa).

The interval 1 to 39 is disordered; the sequence is MTYSTTKSVAMNPDEDAPPSDINSSGRLMSHSEVEPRGN.

The protein belongs to the enoyl-CoA hydratase/isomerase family.

The enzyme catalyses a (3S)-3-hydroxyacyl-CoA = a (2E)-enoyl-CoA + H2O. The catalysed reaction is a 4-saturated-(3S)-3-hydroxyacyl-CoA = a (3E)-enoyl-CoA + H2O. Its pathway is mycotoxin biosynthesis. Enoyl-CoA hydratase; part of the gene clusters that mediate the biosynthesis of the host-selective toxins (HSTs) AF-toxins responsible for Alternaria black spot of strawberry disease by the strawberry pathotype. AF-toxin I and III are valine derivatives of 2,3-dyhydroxy-isovaleric acid and 2-hydroxy-isovaleric acid respectively, while AF II is an isoleucine derivative of 2-hydroxy-valeric acid. These derivatives are bound to a 9,10-epoxy-8-hydroxy-9-methyl-decatrienoic acid (EDA) moiety. On cellular level, AF-toxin affects plasma membrane of susceptible cells and cause a sudden increase in loss of K(+) after a few minutes of toxin treatment. The aldo-keto reductase AFTS1 catalyzes the conversion of 2-keto-isovaleric acid (2-KIV) to 2-hydroxy-isovaleric acid (2-HIV) by reduction of its ketone to an alcohol. The acyl-CoA ligase AFT1, the hydrolase AFT2 and the enoyl-CoA hydratases AFT3 and AFT6, but also the polyketide synthase AFT9, the acyl-CoA dehydrogenase AFT10, the cytochrome P450 monooxygenase AFT11 and the oxidoreductase AFT12 are all involved in the biosynthesis of the AK-, AF- and ACT-toxin common EDA structural moiety. The exact function of each enzyme, and of additional enzymes identified within the AF-toxin clusters have still to be determined. The sequence is that of Enoyl-CoA hydratase AFT6-1 from Alternaria alternata (Alternaria rot fungus).